The following is a 196-amino-acid chain: Inosine triphosphate pyrophosphatase 2 (196 aa).

T20 to K25 contacts ITP. Residue E48 coordinates Mg(2+). ITP-binding positions include K61, D77 to T78, K94, F153 to D156, K177, and P182 to R183.

It belongs to the HAM1 NTPase family. As to quaternary structure, homodimer. Requires Mg(2+) as cofactor. Mn(2+) serves as cofactor.

The protein localises to the cytoplasm. It catalyses the reaction ITP + H2O = IMP + diphosphate + H(+). It carries out the reaction dITP + H2O = dIMP + diphosphate + H(+). The enzyme catalyses XTP + H2O = XMP + diphosphate + H(+). Functionally, pyrophosphatase that hydrolyzes non-canonical purine nucleotides such as inosine triphosphate (ITP), deoxyinosine triphosphate (dITP) or xanthosine 5'-triphosphate (XTP) to their respective monophosphate derivatives. The enzyme does not distinguish between the deoxy- and ribose forms. Probably excludes non-canonical purines from RNA and DNA precursor pools, thus preventing their incorporation into RNA and DNA and avoiding chromosomal lesions. In Trypanosoma cruzi (strain CL Brener), this protein is Inosine triphosphate pyrophosphatase 2.